We begin with the raw amino-acid sequence, 381 residues long: 3-hydroxyisobutyryl-CoA hydrolase, mitochondrial (381 aa).

The transit peptide at 1–25 directs the protein to the mitochondrion; that stretch reads MDRLLTISNHIGKNIRQFSTSTEEV. The substrate site is built by glutamate 116, glycine 141, glutamate 164, and aspartate 172.

This sequence belongs to the enoyl-CoA hydratase/isomerase family.

Its subcellular location is the mitochondrion. It carries out the reaction 3-hydroxy-2-methylpropanoyl-CoA + H2O = 3-hydroxy-2-methylpropanoate + CoA + H(+). It functions in the pathway amino-acid degradation; L-valine degradation. Hydrolyzes 3-hydroxyisobutyryl-CoA (HIBYL-CoA), a saline catabolite. The protein is 3-hydroxyisobutyryl-CoA hydrolase, mitochondrial (hibch) of Dictyostelium discoideum (Social amoeba).